The primary structure comprises 446 residues: Sterile alpha motif domain-containing protein 7 (446 aa).

Residues 94 to 168 (HTARTEMEMY…NLQGNPMLAA (75 aa)) form a required for localization to nuclear polycomb bodies region. Disordered regions lie at residues 187–207 (NTGN…QAEE) and 225–277 (KDPD…AWDD). Residues 232–249 (PSNQKSSETNEKPTTALA) show a composition bias toward polar residues. The region spanning 327 to 392 (WTVDDVHSFI…SQVSQHVGSM (66 aa)) is the SAM domain.

In terms of assembly, monomer, homodimer and homooligomer. Component of a Polycomb group (PcG) multiprotein PRC1-like complex. Interacts with PHC2, NR2E3 and SAMD11. Interacts with RNF1 in a PHC2-dependent manner. As to expression, expressed in the retina (at protein level). Expressed in the retinal inner and outer nuclear layers.

Its subcellular location is the nucleus. It is found in the cytoplasm. Component of a Polycomb group (PcG) multiprotein PRC1-like complex, essential for establishing rod photoreceptor cell identity and function by silencing nonrod gene expression in developing rod photoreceptor cells. Via its association with the PRC1-like complex, promotes epigenetic repressive marks H3K27me3 and H2AK119ub marks in nonrod genes, silencing their transcription. Represses Crx-controlled photoreceptor-specific gene expression. This chain is Sterile alpha motif domain-containing protein 7 (SAMD7), found in Homo sapiens (Human).